The following is a 326-amino-acid chain: Transcription initiation factor IIB (326 aa).

Residues Asp-26 to Glu-57 form a TFIIB-type zinc finger. Positions 30, 33, 49, and 52 each coordinate Zn(2+). 2 tandem repeats follow at residues Ser-143–Leu-226 and Asp-237–Glu-318.

The protein belongs to the TFIIB family.

In terms of biological role, stabilizes TBP binding to an archaeal box-A promoter. Also responsible for recruiting RNA polymerase II to the pre-initiation complex (DNA-TBP-TFIIB). In Archaeoglobus fulgidus (strain ATCC 49558 / DSM 4304 / JCM 9628 / NBRC 100126 / VC-16), this protein is Transcription initiation factor IIB.